The sequence spans 214 residues: tRNA (guanine-N(7)-)-methyltransferase (214 aa).

Glu-43, Glu-68, Asp-95, and Asp-117 together coordinate S-adenosyl-L-methionine. Residue Asp-117 is part of the active site. Substrate contacts are provided by residues Lys-121, Asp-153, and 191–194; that span reads TEYE.

This sequence belongs to the class I-like SAM-binding methyltransferase superfamily. TrmB family.

It carries out the reaction guanosine(46) in tRNA + S-adenosyl-L-methionine = N(7)-methylguanosine(46) in tRNA + S-adenosyl-L-homocysteine. It functions in the pathway tRNA modification; N(7)-methylguanine-tRNA biosynthesis. Functionally, catalyzes the formation of N(7)-methylguanine at position 46 (m7G46) in tRNA. This is tRNA (guanine-N(7)-)-methyltransferase from Brevibacillus brevis (strain 47 / JCM 6285 / NBRC 100599).